The sequence spans 725 residues: N-alpha-acetyltransferase 35, NatC auxiliary subunit (725 aa).

Phosphoserine is present on Ser187. The tract at residues 548–573 is disordered; sequence ERIMEEQQKGRSSKKTKKKKKVRPLS. Residues 558–571 show a composition bias toward basic residues; the sequence is RSSKKTKKKKKVRP.

This sequence belongs to the MAK10 family. As to quaternary structure, component of the N-terminal acetyltransferase C (NatC) complex, which is composed of NAA35, NAA38 and NAA30.

Its subcellular location is the cytoplasm. Its function is as follows. Auxillary component of the N-terminal acetyltransferase C (NatC) complex which catalyzes acetylation of N-terminal methionine residues. N-terminal acetylation protects proteins from ubiquitination and degradation by the N-end rule pathway. Involved in regulation of apoptosis and proliferation of smooth muscle cells. The chain is N-alpha-acetyltransferase 35, NatC auxiliary subunit (NAA35) from Macaca fascicularis (Crab-eating macaque).